Consider the following 332-residue polypeptide: DNA-directed RNA polymerase subunit alpha (332 aa).

Residues M1–D231 form an alpha N-terminal domain (alpha-NTD) region. Positions F252 to R332 are alpha C-terminal domain (alpha-CTD).

This sequence belongs to the RNA polymerase alpha chain family. As to quaternary structure, homodimer. The RNAP catalytic core consists of 2 alpha, 1 beta, 1 beta' and 1 omega subunit. When a sigma factor is associated with the core the holoenzyme is formed, which can initiate transcription.

It catalyses the reaction RNA(n) + a ribonucleoside 5'-triphosphate = RNA(n+1) + diphosphate. DNA-dependent RNA polymerase catalyzes the transcription of DNA into RNA using the four ribonucleoside triphosphates as substrates. The sequence is that of DNA-directed RNA polymerase subunit alpha from Delftia acidovorans (strain DSM 14801 / SPH-1).